Consider the following 127-residue polypeptide: NADPH-dependent 7-cyano-7-deazaguanine reductase (127 aa).

Cys40 functions as the Thioimide intermediate in the catalytic mechanism. Asp47 acts as the Proton donor in catalysis. Substrate contacts are provided by residues 62–64 (VEL) and 81–82 (HE).

It belongs to the GTP cyclohydrolase I family. QueF type 1 subfamily.

It localises to the cytoplasm. It carries out the reaction 7-aminomethyl-7-carbaguanine + 2 NADP(+) = 7-cyano-7-deazaguanine + 2 NADPH + 3 H(+). Its pathway is tRNA modification; tRNA-queuosine biosynthesis. Its function is as follows. Catalyzes the NADPH-dependent reduction of 7-cyano-7-deazaguanine (preQ0) to 7-aminomethyl-7-deazaguanine (preQ1). The protein is NADPH-dependent 7-cyano-7-deazaguanine reductase of Campylobacter jejuni (strain RM1221).